A 1334-amino-acid polypeptide reads, in one-letter code: Putative transmembrane protein ORF1334 (1334 aa).

Residues 53–73 (VSIVVLVLTLFIIPVIIPPAH) traverse the membrane as a helical segment. The segment at 1107–1135 (LSASTTPPSSTTPTPPSSSSSSSSSSSIS) is disordered. A compositionally biased stretch (low complexity) spans 1110 to 1135 (STTPPSSTTPTPPSSSSSSSSSSSIS). The next 3 helical transmembrane spans lie at 1256–1276 (AVLPPIYALPLFLLFAGSFFI), 1292–1312 (IIYIFFVAPFLIVIGIPTSVV), and 1313–1333 (YGTVVGALIIIIIGLWASRSQ).

It localises to the host membrane. The sequence is that of Putative transmembrane protein ORF1334 from Acidianus two-tailed virus (ATV).